Here is a 267-residue protein sequence, read N- to C-terminus: Putative carbamate hydrolase RutD (267 aa).

The 117-residue stretch at 23–139 (VVLLSSGLGG…IQRCFDTRIH (117 aa)) folds into the AB hydrolase-1 domain.

It belongs to the AB hydrolase superfamily. Hydrolase RutD family.

It carries out the reaction carbamate + 2 H(+) = NH4(+) + CO2. Involved in pyrimidine catabolism. May facilitate the hydrolysis of carbamate, a reaction that can also occur spontaneously. The chain is Putative carbamate hydrolase RutD from Caulobacter segnis (strain ATCC 21756 / DSM 7131 / JCM 7823 / NBRC 15250 / LMG 17158 / TK0059) (Mycoplana segnis).